The sequence spans 195 residues: Thymidine kinase (195 aa).

ATP-binding positions include 15–22 and 88–91; these read GSMFSGKS and DEVQ. Catalysis depends on glutamate 89, which acts as the Proton acceptor. Residues cysteine 145, cysteine 148, cysteine 183, and residue 186 each contribute to the Zn(2+) site.

This sequence belongs to the thymidine kinase family. As to quaternary structure, homotetramer.

The protein resides in the cytoplasm. It carries out the reaction thymidine + ATP = dTMP + ADP + H(+). The chain is Thymidine kinase from Bacillus cereus (strain ATCC 10987 / NRS 248).